Reading from the N-terminus, the 146-residue chain is Cell division protein SepF (146 aa).

It belongs to the SepF family. As to quaternary structure, homodimer. Interacts with FtsZ.

The protein resides in the cytoplasm. In terms of biological role, cell division protein that is part of the divisome complex and is recruited early to the Z-ring. Probably stimulates Z-ring formation, perhaps through the cross-linking of FtsZ protofilaments. Its function overlaps with FtsA. This is Cell division protein SepF from Alkaliphilus oremlandii (strain OhILAs) (Clostridium oremlandii (strain OhILAs)).